The primary structure comprises 286 residues: Cytosolic 5'-nucleotidase 3 (286 aa).

The active-site Nucleophile is D38. Residues D38 and D40 each contribute to the Mg(2+) site. Catalysis depends on D40, which acts as the Proton donor. Residues E85, S106, 153–154 (SA), and K202 contribute to the substrate site. Residue D227 participates in Mg(2+) binding.

Belongs to the pyrimidine 5'-nucleotidase family.

It localises to the cytoplasm. It carries out the reaction a ribonucleoside 5'-phosphate + H2O = a ribonucleoside + phosphate. Functionally, can act both as nucleotidase and as phosphotransferase. The protein is Cytosolic 5'-nucleotidase 3 (nt5c3) of Danio rerio (Zebrafish).